Reading from the N-terminus, the 141-residue chain is ATP synthase epsilon chain (141 aa).

The protein belongs to the ATPase epsilon chain family. F-type ATPases have 2 components, CF(1) - the catalytic core - and CF(0) - the membrane proton channel. CF(1) has five subunits: alpha(3), beta(3), gamma(1), delta(1), epsilon(1). CF(0) has three main subunits: a, b and c.

The protein resides in the cell inner membrane. Functionally, produces ATP from ADP in the presence of a proton gradient across the membrane. The chain is ATP synthase epsilon chain (atpC) from Acidithiobacillus ferridurans.